The primary structure comprises 660 residues: Protein translocase subunit SecA 2 (660 aa).

ATP-binding positions include Gln-113, 131-135 (GEGKT), and Asp-539.

It belongs to the SecA family. As to quaternary structure, monomer and homodimer. Part of the essential Sec protein translocation apparatus which comprises SecA, SecYEG and auxiliary proteins SecDF-YajC and YidC.

It localises to the cell inner membrane. It is found in the cytoplasm. It carries out the reaction ATP + H2O + cellular proteinSide 1 = ADP + phosphate + cellular proteinSide 2.. Its function is as follows. Part of the Sec protein translocase complex. Interacts with the SecYEG preprotein conducting channel. Has a central role in coupling the hydrolysis of ATP to the transfer of proteins into and across the cell membrane, serving both as a receptor for the preprotein-SecB complex and as an ATP-driven molecular motor driving the stepwise translocation of polypeptide chains across the membrane. This Bordetella avium (strain 197N) protein is Protein translocase subunit SecA 2.